The chain runs to 311 residues: MVSTKTQIAGFEFDNCLMNAAGVACMTIEELEEVKNSAAGTFVTKTATLDFRQGNPEPRYQDVPLGSINSMGLPNNGLDYYLDYLLDLQEKESNRTFFLSLVGMSPEETHTILKKVQESDFRGLTELNLSCPNVPGKPQIAYDFETTDRILAEVFAYFTKPLGIKLPPYFDIVHFDQAAAIFNKYPLKFVNCVNSSGNGLYIEDESVVIRPKNGFGGIGGEYIKPTALANVHAFYQRLNPQIQIIGTGGVLTGRDAFEHILCGASMVQVGTTLHKEGVSAFDRITNELKAIMVEKGYESLEDFRGKLRYID.

Residues Lys45, Asn69–Leu73, and Asn128 each bind substrate. Lys45 to Thr46 is a binding site for FMN. Residue Asn128 participates in FMN binding. The active-site Nucleophile is the Cys131. Residues Lys165 and Val193 each coordinate FMN. A substrate-binding site is contributed by Asn194–Ser195. FMN-binding positions include Gly220, Gly248–Gly249, and Gly270–Thr271.

This sequence belongs to the dihydroorotate dehydrogenase family. Type 1 subfamily. Homodimer. FMN serves as cofactor.

The protein resides in the cytoplasm. It catalyses the reaction (S)-dihydroorotate + fumarate = orotate + succinate. The protein operates within pyrimidine metabolism; UMP biosynthesis via de novo pathway. Functionally, catalyzes the conversion of dihydroorotate to orotate with fumarate as the electron acceptor. The sequence is that of Probable dihydroorotate dehydrogenase A (fumarate) (pyrDA) from Streptococcus pneumoniae (strain ATCC BAA-255 / R6).